We begin with the raw amino-acid sequence, 312 residues long: Ribonuclease HIII (312 aa).

An RNase H type-2 domain is found at 95 to 311 (FNCIGSDEAG…REKAQKILKP (217 aa)). A divalent metal cation contacts are provided by Asp-101, Glu-102, and Asp-206.

This sequence belongs to the RNase HII family. RnhC subfamily. Mn(2+) is required as a cofactor. Mg(2+) serves as cofactor.

It localises to the cytoplasm. The catalysed reaction is Endonucleolytic cleavage to 5'-phosphomonoester.. In terms of biological role, endonuclease that specifically degrades the RNA of RNA-DNA hybrids. The protein is Ribonuclease HIII of Staphylococcus aureus (strain USA300).